Here is a 176-residue protein sequence, read N- to C-terminus: Ribosome rescue factor SmrB (176 aa).

The Smr domain occupies 93-168 (LDLHGYRQSE…GDAALLVLID (76 aa)).

This sequence belongs to the SmrB family. Associates with collided ribosomes, but not with correctly translating polysomes.

Acts as a ribosome collision sensor. Detects stalled/collided disomes (pairs of ribosomes where the leading ribosome is stalled and a second ribosome has collided with it) and endonucleolytically cleaves mRNA at the 5' boundary of the stalled ribosome. Stalled/collided disomes form a new interface (primarily via the 30S subunits) that binds SmrB. Cleaved mRNA becomes available for tmRNA ligation, leading to ribosomal subunit dissociation and rescue of stalled ribosomes. In Shewanella baltica (strain OS195), this protein is Ribosome rescue factor SmrB.